The sequence spans 311 residues: N-acetylmuramic acid 6-phosphate etherase (311 aa).

The region spanning 66-230 (VVEAFEADGR…TTAAMVRLGK (165 aa)) is the SIS domain. Glu94 (proton donor) is an active-site residue. The active site involves Glu125.

It belongs to the GCKR-like family. MurNAc-6-P etherase subfamily. Homodimer.

The catalysed reaction is N-acetyl-D-muramate 6-phosphate + H2O = N-acetyl-D-glucosamine 6-phosphate + (R)-lactate. The protein operates within amino-sugar metabolism; N-acetylmuramate degradation. In terms of biological role, specifically catalyzes the cleavage of the D-lactyl ether substituent of MurNAc 6-phosphate, producing GlcNAc 6-phosphate and D-lactate. The protein is N-acetylmuramic acid 6-phosphate etherase of Salinibacter ruber (strain DSM 13855 / M31).